Reading from the N-terminus, the 271-residue chain is uncharacterized protein (271 aa).

Positions 233–261 (VEPDPNRFSEPVDQPTLVEEGKEARRTER) are disordered. Residues 251 to 261 (EEGKEARRTER) are compositionally biased toward basic and acidic residues.

May be involved in swimming motility. This is an uncharacterized protein from Haloferax volcanii (strain ATCC 29605 / DSM 3757 / JCM 8879 / NBRC 14742 / NCIMB 2012 / VKM B-1768 / DS2) (Halobacterium volcanii).